The following is a 421-amino-acid chain: RNase J-like protein (421 aa).

His-55, His-57, Asp-59, His-60, His-132, Asp-153, and His-389 together coordinate Zn(2+).

It belongs to the metallo-beta-lactamase superfamily. RNA-metabolizing metallo-beta-lactamase-like family. Forms homodimers on heating to 60 degrees Celsius which may be the active form. Zn(2+) is required as a cofactor.

Inhibited by imidazole. Its function is as follows. A 5'-3' exoribonuclease with a strong reference for 5'-monophosphorylated RNA and no endoribonuclease activty. This chain is RNase J-like protein, found in Methanocaldococcus jannaschii (strain ATCC 43067 / DSM 2661 / JAL-1 / JCM 10045 / NBRC 100440) (Methanococcus jannaschii).